Reading from the N-terminus, the 548-residue chain is Membrane protein insertase YidC (548 aa).

Residues 6-26 (NLLVIALLFVSFMIWQAWEQD) form a helical membrane-spanning segment. Residues 28–55 (NPQPQAQQTTQTTTTAAGSAADQGVPAS) are disordered. Residues 30 to 50 (QPQAQQTTQTTTTAAGSAADQ) are compositionally biased toward low complexity. Transmembrane regions (helical) follow at residues 350-370 (FVGN…GIMY), 420-440 (LGGC…YYML), 458-478 (LSAQ…MFFI), and 499-519 (PVIF…YYIV).

Belongs to the OXA1/ALB3/YidC family. Type 1 subfamily. As to quaternary structure, interacts with the Sec translocase complex via SecD. Specifically interacts with transmembrane segments of nascent integral membrane proteins during membrane integration.

The protein resides in the cell inner membrane. Required for the insertion and/or proper folding and/or complex formation of integral membrane proteins into the membrane. Involved in integration of membrane proteins that insert both dependently and independently of the Sec translocase complex, as well as at least some lipoproteins. Aids folding of multispanning membrane proteins. The polypeptide is Membrane protein insertase YidC (Shigella flexneri).